Consider the following 211-residue polypeptide: Large ribosomal subunit protein uL4 (211 aa).

The interval 44 to 90 is disordered; that stretch reads ERQGTHSTLTKGEVRGGGKKPWRQKHTGKARTGSTRNPHWTGGGVVF. Basic residues predominate over residues 60–72; sequence GGKKPWRQKHTGK.

The protein belongs to the universal ribosomal protein uL4 family. In terms of assembly, part of the 50S ribosomal subunit.

One of the primary rRNA binding proteins, this protein initially binds near the 5'-end of the 23S rRNA. It is important during the early stages of 50S assembly. It makes multiple contacts with different domains of the 23S rRNA in the assembled 50S subunit and ribosome. Its function is as follows. Forms part of the polypeptide exit tunnel. This chain is Large ribosomal subunit protein uL4, found in Ureaplasma parvum serovar 3 (strain ATCC 27815 / 27 / NCTC 11736).